A 270-amino-acid chain; its full sequence is uncharacterized protein (270 aa).

Residues 1–37 (MATHTSKRRIHRWENNELSEENSTIIYFPARGLMWTH) are Cytoplasmic-facing. The chain crosses the membrane as a helical span at residues 38–58 (FPFVLGICLEFVGYVLKIVFI). At 59–65 (NSPSIST) the chain is on the extracellular side. The helical transmembrane segment at 66 to 86 (FIAQSVLLLIAPSLYALSIFM) threads the bilayer. Topologically, residues 87–93 (LFSKMAR) are cytoplasmic. A helical transmembrane segment spans residues 94-114 (LILMEAYMLIPAKFSTVSFVV). At 115–140 (ADMIGRVLQAVGGGLLSSWNSRNTGR) the chain is on the extracellular side. The helical transmembrane segment at 141–161 (ILIIVGLFIQIFCYTFLTFSQ) threads the bilayer. The Cytoplasmic segment spans residues 162–181 (LFLHYKMKATPSKIVRDSNE). Residues 182 to 202 (WFQYNFILLAGILLVNGRTIV) traverse the membrane as a helical segment. The Extracellular segment spans residues 203–220 (RVVQFLMGLQSYIGQHEW). The chain crosses the membrane as a helical span at residues 221–241 (CLYVFDTVLMFLLPLIFLATF). At 242-270 (RARNLFKLQDKSVNIQLNKLLDKESVSED) the chain is on the cytoplasmic side.

The protein belongs to the lipid-translocating exporter (LTE) (TC 9.A.26.1) family.

It is found in the membrane. This is an uncharacterized protein from Saccharomyces cerevisiae (strain ATCC 204508 / S288c) (Baker's yeast).